A 204-amino-acid chain; its full sequence is MGNVSVAVGTAVGIPIAVGVIIALIFWCKLQRRYKKEEIRDADLEKMVMEEVAVSVYDGFKAEINSSSEASTINEKEANQDLKPCQEKTAKAGYTPAYRRQLNASMGTLRPKKQSTAYINVPVIFSGEKVNYGMVRDPSYSFMYPLTLSRKETSSLRSASTSNLSSSTENTALHEEIKLDDPYENDFTNYTVNKREFIDSLRPR.

The chain crosses the membrane as a helical span at residues 6–26 (VAVGTAVGIPIAVGVIIALIF).

It belongs to the SKG1 family.

It localises to the vacuole membrane. In terms of biological role, involved in cell cycle progression and surviving DNA damage. The chain is Altered inheritance of mitochondria protein 20 (AIM20) from Saccharomyces cerevisiae (strain JAY291) (Baker's yeast).